Here is a 258-residue protein sequence, read N- to C-terminus: Snake venom serine protease 3 (258 aa).

The signal sequence occupies residues methionine 1 to alanine 18. Residues glutamine 19–leucine 24 constitute a propeptide that is removed on maturation. Residues valine 25 to alanine 249 form the Peptidase S1 domain. Intrachain disulfides connect cysteine 31-cysteine 163, cysteine 50-cysteine 66, cysteine 98-cysteine 256, cysteine 142-cysteine 210, cysteine 174-cysteine 189, and cysteine 200-cysteine 225. An N-linked (GlcNAc...) asparagine glycan is attached at asparagine 44. Histidine 65 serves as the catalytic Charge relay system. Residue asparagine 103 is glycosylated (N-linked (GlcNAc...) asparagine). Aspartate 110 serves as the catalytic Charge relay system. Residues asparagine 117, asparagine 121, and asparagine 154 are each glycosylated (N-linked (GlcNAc...) asparagine). The active-site Charge relay system is serine 204. N-linked (GlcNAc...) asparagine glycosylation is present at asparagine 251.

Belongs to the peptidase S1 family. Snake venom subfamily. Monomer. In terms of tissue distribution, expressed by the venom gland.

The protein resides in the secreted. Its function is as follows. Snake venom serine protease that may act in the hemostasis system of the prey. The chain is Snake venom serine protease 3 (TLG3) from Craspedocephalus gramineus (Bamboo pit viper).